The primary structure comprises 404 residues: Cysteine desulfurase IscS (404 aa).

Pyridoxal 5'-phosphate-binding positions include 75 to 76 (AT), asparagine 155, glutamine 183, and 203 to 205 (SGH). Position 206 is an N6-(pyridoxal phosphate)lysine (lysine 206). Residue threonine 243 coordinates pyridoxal 5'-phosphate. Cysteine 328 serves as the catalytic Cysteine persulfide intermediate. Cysteine 328 provides a ligand contact to [2Fe-2S] cluster.

It belongs to the class-V pyridoxal-phosphate-dependent aminotransferase family. NifS/IscS subfamily. Homodimer. Forms a heterotetramer with IscU, interacts with other sulfur acceptors. It depends on pyridoxal 5'-phosphate as a cofactor.

It is found in the cytoplasm. It carries out the reaction (sulfur carrier)-H + L-cysteine = (sulfur carrier)-SH + L-alanine. The protein operates within cofactor biosynthesis; iron-sulfur cluster biosynthesis. Master enzyme that delivers sulfur to a number of partners involved in Fe-S cluster assembly, tRNA modification or cofactor biosynthesis. Catalyzes the removal of elemental sulfur atoms from cysteine to produce alanine. Functions as a sulfur delivery protein for Fe-S cluster synthesis onto IscU, an Fe-S scaffold assembly protein, as well as other S acceptor proteins. This Shewanella putrefaciens (strain CN-32 / ATCC BAA-453) protein is Cysteine desulfurase IscS.